The sequence spans 351 residues: D-alanine--D-alanine ligase (351 aa).

Positions 141-349 (KAAFSAAGLP…ISQLVARLIE (209 aa)) constitute an ATP-grasp domain. 176 to 231 (ETQLGYPCFIKPANLGSSVGISKAYDKKELLNGLDLAAQLDSRIVVEKNIKARELE) is a binding site for ATP. Residues aspartate 302, glutamate 316, and asparagine 318 each coordinate Mg(2+).

It belongs to the D-alanine--D-alanine ligase family. Requires Mg(2+) as cofactor. It depends on Mn(2+) as a cofactor.

The protein resides in the cytoplasm. The enzyme catalyses 2 D-alanine + ATP = D-alanyl-D-alanine + ADP + phosphate + H(+). The protein operates within cell wall biogenesis; peptidoglycan biosynthesis. Its function is as follows. Cell wall formation. The protein is D-alanine--D-alanine ligase of Prochlorococcus marinus (strain SARG / CCMP1375 / SS120).